A 181-amino-acid chain; its full sequence is NAD(P)H-quinone oxidoreductase subunit I, chloroplastic (181 aa).

4Fe-4S ferredoxin-type domains are found at residues 55–84 (GRIHFEFDKCIACEVCVRVCPINLPVVDWE) and 95–124 (KNYSIDFAVCIFCGNCVEYCPTNCLSMTEE). [4Fe-4S] cluster contacts are provided by Cys64, Cys67, Cys70, Cys74, Cys104, Cys107, Cys110, and Cys114.

The protein belongs to the complex I 23 kDa subunit family. As to quaternary structure, NDH is composed of at least 16 different subunits, 5 of which are encoded in the nucleus. [4Fe-4S] cluster is required as a cofactor.

It localises to the plastid. The protein resides in the chloroplast thylakoid membrane. It carries out the reaction a plastoquinone + NADH + (n+1) H(+)(in) = a plastoquinol + NAD(+) + n H(+)(out). The catalysed reaction is a plastoquinone + NADPH + (n+1) H(+)(in) = a plastoquinol + NADP(+) + n H(+)(out). Its function is as follows. NDH shuttles electrons from NAD(P)H:plastoquinone, via FMN and iron-sulfur (Fe-S) centers, to quinones in the photosynthetic chain and possibly in a chloroplast respiratory chain. The immediate electron acceptor for the enzyme in this species is believed to be plastoquinone. Couples the redox reaction to proton translocation, and thus conserves the redox energy in a proton gradient. The polypeptide is NAD(P)H-quinone oxidoreductase subunit I, chloroplastic (Angiopteris evecta (Mule's foot fern)).